The primary structure comprises 584 residues: DNA ligase (584 aa).

E249 is an ATP binding site. Catalysis depends on K251, which acts as the N6-AMP-lysine intermediate. Positions 256, 271, 301, 341, 416, and 422 each coordinate ATP.

It belongs to the ATP-dependent DNA ligase family. Mg(2+) is required as a cofactor.

The catalysed reaction is ATP + (deoxyribonucleotide)n-3'-hydroxyl + 5'-phospho-(deoxyribonucleotide)m = (deoxyribonucleotide)n+m + AMP + diphosphate.. Functionally, DNA ligase that seals nicks in double-stranded DNA during DNA replication, DNA recombination and DNA repair. This is DNA ligase from Pyrobaculum neutrophilum (strain DSM 2338 / JCM 9278 / NBRC 100436 / V24Sta) (Thermoproteus neutrophilus).